A 202-amino-acid chain; its full sequence is Regulator of G-protein signaling 16 (202 aa).

S-palmitoyl cysteine attachment occurs at residues cysteine 2 and cysteine 12. The RGS domain maps to 65–181 (SFDLLLSSKN…LKSPAYRDLA (117 aa)). Tyrosine 168 is modified (phosphotyrosine; by EGFR). Position 177 is a phosphotyrosine (tyrosine 177). Residues 183 to 202 (QATAASASPSSSSPAEPLHT) form a disordered region.

Interacts with GNAI1 and GNAQ. Interacts with GNAI3, GNAI3 and GNAO1. Post-translationally, palmitoylated on Cys-2 and/or Cys-12. Phosphorylated. Phosphorylation at Tyr-168 by EGFR enhances GTPase accelerating (GAP) activity toward GNAI1.

It localises to the membrane. Regulates G protein-coupled receptor signaling cascades. Inhibits signal transduction by increasing the GTPase activity of G protein alpha subunits, thereby driving them into their inactive GDP-bound form. Plays an important role in the phototransduction cascade by regulating the lifetime and effective concentration of activated transducin alpha. May regulate extra and intracellular mitogenic signals. The polypeptide is Regulator of G-protein signaling 16 (RGS16) (Bos taurus (Bovine)).